Consider the following 408-residue polypeptide: S-adenosylmethionine synthase (408 aa).

Position 19 (His-19) interacts with ATP. Asp-21 contributes to the Mg(2+) binding site. Residue Glu-47 participates in K(+) binding. L-methionine contacts are provided by Glu-60 and Gln-104. The interval 104 to 114 (QSPEIASGVDH) is flexible loop. ATP is bound by residues 185 to 187 (DAK), 255 to 256 (RF), Asp-264, 270 to 271 (RK), Ala-287, and Lys-291. Asp-264 lines the L-methionine pocket. Position 295 (Lys-295) interacts with L-methionine.

It belongs to the AdoMet synthase family. In terms of assembly, homotetramer; dimer of dimers. Mg(2+) serves as cofactor. Requires K(+) as cofactor.

The protein resides in the cytoplasm. The catalysed reaction is L-methionine + ATP + H2O = S-adenosyl-L-methionine + phosphate + diphosphate. It functions in the pathway amino-acid biosynthesis; S-adenosyl-L-methionine biosynthesis; S-adenosyl-L-methionine from L-methionine: step 1/1. In terms of biological role, catalyzes the formation of S-adenosylmethionine (AdoMet) from methionine and ATP. The overall synthetic reaction is composed of two sequential steps, AdoMet formation and the subsequent tripolyphosphate hydrolysis which occurs prior to release of AdoMet from the enzyme. The protein is S-adenosylmethionine synthase of Deinococcus radiodurans (strain ATCC 13939 / DSM 20539 / JCM 16871 / CCUG 27074 / LMG 4051 / NBRC 15346 / NCIMB 9279 / VKM B-1422 / R1).